A 327-amino-acid chain; its full sequence is Putative gluconeogenesis factor (327 aa).

The protein belongs to the gluconeogenesis factor family.

It is found in the cytoplasm. Its function is as follows. Required for morphogenesis under gluconeogenic growth conditions. This Lactococcus lactis subsp. lactis (strain IL1403) (Streptococcus lactis) protein is Putative gluconeogenesis factor (yjiF).